Here is a 129-residue protein sequence, read N- to C-terminus: Replication initiation control protein YabA (129 aa).

Positions 103, 105, 119, and 122 each coordinate Zn(2+).

The protein belongs to the YabA family. Homotetramer. Interacts with both DnaA and DnaN, acting as a bridge between these two proteins. The cofactor is Zn(2+).

It is found in the cytoplasm. Its subcellular location is the nucleoid. In terms of biological role, involved in control of chromosome replication initiation. Inhibits the cooperative binding of DnaA to the oriC region, thus negatively regulating initiation of chromosome replication. Inhibits the ability of DnaA-ATP to form a helix on DNA; does not disassemble preformed DnaA-DNA helices. Decreases the residence time of DnaA on the chromosome at its binding sites (oriC, replication forks and promoter-binding sites). Tethers DnaA to the replication machinery via the DNA polymerase beta sliding clamp subunit (dnaN). Associates with oriC and other DnaA targets on the chromosome in a DnaA-dependent manner. This Listeria innocua serovar 6a (strain ATCC BAA-680 / CLIP 11262) protein is Replication initiation control protein YabA.